The primary structure comprises 208 residues: Outer-membrane lipoprotein carrier protein (208 aa).

Positions 1-22 (MRKTLSILAISLPLLVSGYAQA) are cleaved as a signal peptide.

It belongs to the LolA family. Monomer.

The protein resides in the periplasm. In terms of biological role, participates in the translocation of lipoproteins from the inner membrane to the outer membrane. Only forms a complex with a lipoprotein if the residue after the N-terminal Cys is not an aspartate (The Asp acts as a targeting signal to indicate that the lipoprotein should stay in the inner membrane). This is Outer-membrane lipoprotein carrier protein from Shewanella sediminis (strain HAW-EB3).